The sequence spans 464 residues: Asparagine--tRNA ligase (464 aa).

It belongs to the class-II aminoacyl-tRNA synthetase family. Homodimer.

It is found in the cytoplasm. It carries out the reaction tRNA(Asn) + L-asparagine + ATP = L-asparaginyl-tRNA(Asn) + AMP + diphosphate + H(+). This chain is Asparagine--tRNA ligase, found in Azobacteroides pseudotrichonymphae genomovar. CFP2.